The sequence spans 165 residues: GPI-anchored protein LORELEI (165 aa).

The signal sequence occupies residues 1–20 (MELILLFFFLMALLVSLSSS). The required for its function in pollen tube reception stretch occupies residues 82–93 (PYVSQINDMNSD). Asparagine 137 carries N-linked (GlcNAc...) asparagine glycosylation. A lipid anchor (GPI-anchor amidated serine) is attached at serine 139. The propeptide at 140–165 (TADSTPRFISLLISAATAVFALLVLT) is removed in mature form.

Interacts with FER. Expressed in leaves, buds, flowers and stems. Highest expression in the synergid cells of the female gametophyte.

It is found in the cell membrane. In terms of biological role, female gametophyte-specific component of the signaling pathway required for fertilization. Required for reception of the pollen tube by the female gametophyte. Acts specifically at the synergid cell surface for pollen tube reception. Plays a role in double fertilization and early seed development. Component of the FER-regulated Rho GTPase signaling complex. Acts as a chaperone and coreceptor for FER. Required for localization of FER to the plasma membrane. In Arabidopsis thaliana (Mouse-ear cress), this protein is GPI-anchored protein LORELEI (LRE).